The following is a 396-amino-acid chain: Elongation factor Tu (396 aa).

In terms of domain architecture, tr-type G spans 10-206 (KPHVNVGTIG…ALDTYIPTPE (197 aa)). The interval 19–26 (GHVDHGKT) is G1. 19–26 (GHVDHGKT) serves as a coordination point for GTP. Threonine 26 contacts Mg(2+). Residues 60-64 (GITIN) are G2. The interval 81–84 (DCPG) is G3. GTP is bound by residues 81–85 (DCPGH) and 136–139 (NKCD). A G4 region spans residues 136–139 (NKCD). A G5 region spans residues 174-176 (SAK).

Belongs to the TRAFAC class translation factor GTPase superfamily. Classic translation factor GTPase family. EF-Tu/EF-1A subfamily. As to quaternary structure, monomer.

The protein resides in the cytoplasm. The enzyme catalyses GTP + H2O = GDP + phosphate + H(+). GTP hydrolase that promotes the GTP-dependent binding of aminoacyl-tRNA to the A-site of ribosomes during protein biosynthesis. The protein is Elongation factor Tu of Thiomonas delicata (Thiomonas cuprina).